A 482-amino-acid chain; its full sequence is MKSSFGKKEGEYSRLVSKSSNKLLNSLWEKKQIPEEGWTEHTLDLFLSWLSSHDTNNRVDMIPVGAGEREGRVLTPLVQRLHSNLTHGIGRSGNLLEIQPKALGSSMLACLSNEFAKHALHLLGLQTVKSCIVVPLCTGMSLSLCMTSWRRRRPKAKYVIWLRIDQKSSLKSIYHAGFEAIIVEPTRDHDALVTDVETVNRIVEQRGEELLCVMTTTSCFAPRSPDNIEAISAICAAHDVPHLVNNAYGLQSEETIRKIAAAHECGRVDAVVQSLDKNFQVPVGGALIAGFKQSHIQSIAQAYPGRASSVPSRDLVLTFLYQGQSAFLEPFQKQKQMFLKMRRKLTSFAENVGECVYDVPENEISLAMTLSTIPPTKQTLFGSVLFSRGITGARVVQSSQSKTTIEGCEFVNFGSHTAEQHGGYLNIACSIGMADHELEELFTRLTSSYAKFIRQLAKEDDRRGGSSGRRVPMNESFDMEND.

The segment at 1 to 36 (MKSSFGKKEGEYSRLVSKSSNKLLNSLWEKKQIPEE) is tetramerization. Arg69 contacts pyridoxal 5'-phosphate. Positions 90–100 (GRSGNLLEIQP) are phosphate loop (P-loop). Arg91, Ser92, and Gln99 together coordinate substrate. An N6-(pyridoxal phosphate)lysine modification is found at Lys277. Arg306 is a substrate binding site. Arg388 provides a ligand contact to tRNA. Positions 461–482 (DRRGGSSGRRVPMNESFDMEND) are disordered.

This sequence belongs to the SepSecS family. As to quaternary structure, homotetramer formed by a catalytic dimer and a non-catalytic dimer serving as a binding platform that orients tRNASec for catalysis. Each tetramer binds the CCA ends of two tRNAs which point to the active sites of the catalytic dimer. The cofactor is pyridoxal 5'-phosphate.

The protein localises to the cytoplasm. It carries out the reaction O-phospho-L-seryl-tRNA(Sec) + selenophosphate + H2O = L-selenocysteinyl-tRNA(Sec) + 2 phosphate. It participates in aminoacyl-tRNA biosynthesis; selenocysteinyl-tRNA(Sec) biosynthesis; selenocysteinyl-tRNA(Sec) from L-seryl-tRNA(Sec) (archaeal/eukaryal route): step 2/2. Functionally, converts O-phosphoseryl-tRNA(Sec) to selenocysteinyl-tRNA(Sec) required for selenoprotein biosynthesis. This chain is O-phosphoseryl-tRNA(Sec) selenium transferase (secs-1), found in Caenorhabditis briggsae.